An 810-amino-acid polypeptide reads, in one-letter code: Exocyst complex component 6B (810 aa).

Residues 79–118 (TELLKVRGEAQKLKNQVTDTNRKLQHEGKELVIAMEELKQ) are a coiled coil. The interval 258–282 (ESTSPKSEQDSGILDVEDEEDDEEV) is disordered. Over residues 272–282 (DVEDEEDDEEV) the composition is skewed to acidic residues.

Belongs to the SEC15 family. As to quaternary structure, the exocyst complex is composed of SEC3, SEC5, SEC6, SEC8, SEC10, SEC15, EXO70 and EXO84.

In terms of biological role, component of the exocyst complex involved in the docking of exocytic vesicles with fusion sites on the plasma membrane. In Mus musculus (Mouse), this protein is Exocyst complex component 6B (Exoc6b).